We begin with the raw amino-acid sequence, 256 residues long: Nickel import ATP-binding protein NikD (256 aa).

The region spanning Leu6–Leu245 is the ABC transporter domain. Gly38 to Ser45 is a binding site for ATP.

It belongs to the ABC transporter superfamily. Nickel importer (TC 3.A.1.5.3) family. As to quaternary structure, the complex is composed of two ATP-binding proteins (NikD and NikE), two transmembrane proteins (NikB and NikC) and a solute-binding protein (NikA).

It localises to the cell inner membrane. It carries out the reaction Ni(2+)(out) + ATP + H2O = Ni(2+)(in) + ADP + phosphate + H(+). Its function is as follows. Part of the ABC transporter complex NikABCDE involved in nickel import. Responsible for energy coupling to the transport system. This Pseudomonas putida (strain ATCC 47054 / DSM 6125 / CFBP 8728 / NCIMB 11950 / KT2440) protein is Nickel import ATP-binding protein NikD.